We begin with the raw amino-acid sequence, 88 residues long: Small ribosomal subunit protein eS25B (88 aa).

The protein belongs to the eukaryotic ribosomal protein eS25 family. In terms of assembly, component of the small ribosomal subunit (SSU). Mature yeast ribosomes consist of a small (40S) and a large (60S) subunit. The 40S small subunit contains 1 molecule of ribosomal RNA (18S rRNA) and at least 33 different proteins. The large 60S subunit contains 3 rRNA molecules (25S, 5.8S and 5S rRNA) and at least 46 different proteins.

Its subcellular location is the cytoplasm. Its function is as follows. Component of the ribosome, a large ribonucleoprotein complex responsible for the synthesis of proteins in the cell. The small ribosomal subunit (SSU) binds messenger RNAs (mRNAs) and translates the encoded message by selecting cognate aminoacyl-transfer RNA (tRNA) molecules. The large subunit (LSU) contains the ribosomal catalytic site termed the peptidyl transferase center (PTC), which catalyzes the formation of peptide bonds, thereby polymerizing the amino acids delivered by tRNAs into a polypeptide chain. The nascent polypeptides leave the ribosome through a tunnel in the LSU and interact with protein factors that function in enzymatic processing, targeting, and the membrane insertion of nascent chains at the exit of the ribosomal tunnel. The sequence is that of Small ribosomal subunit protein eS25B (rps2501) from Schizosaccharomyces pombe (strain 972 / ATCC 24843) (Fission yeast).